We begin with the raw amino-acid sequence, 466 residues long: MFEKYPGKMEGLFRHNPYMAFPPAVPGLPPGLPPAVSFGSLQGAFQPKNTNPELPPRLGPVLSGLPQKGTQIPDHFRPPLRKPGKWCAMHVRVAYMILRHQEKMKGDSHKLDFRNDLLPCLPGPYGALPPGQELSHPASLFTATGAVHAAANPFTTAPGAHGPFLSPSTHIDPFGRPTSFASLAALSNGAFGGLGSPTFNSSAVFAQKESPGAPPAFASPPDPWGRLHRSPLAFPAWVRPPETARTPGSDKERPMERREPSVTKEEKDRDLPFSRPQLRVSPATPKARAGEEGARPAKESVRVKEERKEEAAAAAAAAAAAAAAAAAAAAAAAATTGPQGLHLLLERPRPPPFLGPSLPERCAGFPEPTWLAGPPRLARPPRFYEAGEELTGPGAMAAARLYSLDPAHPLLYSRLAPPPPPTATPGTPHLLSKTPPGALLGAPPPLVPAPRPSSPPRAPGPARADR.

K8 participates in a covalent cross-link: Glycyl lysine isopeptide (Lys-Gly) (interchain with G-Cter in SUMO2). An asymmetric dimethylarginine mark is found at R229 and R239. 2 disordered regions span residues 236–315 (AWVR…AAAA) and 410–466 (LLYS…RADR). Over residues 248–272 (GSDKERPMERREPSVTKEEKDRDLP) the composition is skewed to basic and acidic residues. S281 carries the phosphoserine modification. The segment covering 288-311 (RAGEEGARPAKESVRVKEERKEEA) has biased composition (basic and acidic residues). Pro residues predominate over residues 442–459 (APPPLVPAPRPSSPPRAP).

This Mus musculus (Mouse) protein is Probable fibrosin-1 (Fbrs).